The chain runs to 451 residues: MGKYFGTDGVRGVANQELTPELAFKLGRYGGYVLAHNKGEKHPRVLVGRDTRVSGEMLESALIAGLISIGAEVMRLGVISTPGVAYLTKEMEAALGVMISASHNPVADNGIKFFGSDGFKLSDDQENEIEQLLDQTNPDLPRPVGEDIVHYSDYFEGAQKYLSYLKSTVDVNFEGLKIVLDGANGSTSSLAPFLFGDLEADTETIGCNPDGYNINEQCGSTHPEKLAEAVLETESDFGLAFDGDGDRIIAVDENGQIVDGDQIMFIIGQEMYKNQELNGNMIVSTVMSNLGFYKALEKEGIQSNKTKVGDRYVVEEMRRGNYNLGGEQSGHIVLMDYNTTGDGLLTGVQLASVIKMSGKTLSELASQMKKYPQSLINVRVTDKYRVEENIHVQEIMTKVETEMNGEGRILVRPSGTEPLVRVMVEAATDADAERYAQSIADVVEDKMGLDK.

Residue S102 is the Phosphoserine intermediate of the active site. Mg(2+) contacts are provided by S102, D242, D244, and D246. S102 is subject to Phosphoserine.

It belongs to the phosphohexose mutase family. Mg(2+) serves as cofactor. Post-translationally, activated by phosphorylation.

The catalysed reaction is alpha-D-glucosamine 1-phosphate = D-glucosamine 6-phosphate. Its function is as follows. Catalyzes the conversion of glucosamine-6-phosphate to glucosamine-1-phosphate. This Staphylococcus epidermidis (strain ATCC 35984 / DSM 28319 / BCRC 17069 / CCUG 31568 / BM 3577 / RP62A) protein is Phosphoglucosamine mutase.